The following is a 226-amino-acid chain: Ribonuclease T (226 aa).

Residues 20-194 (VVIDVETAGF…YDTERTAELF (175 aa)) enclose the Exonuclease domain. Mg(2+)-binding residues include Asp23, Glu25, His181, and Asp186. The Proton donor/acceptor role is filled by His181.

It belongs to the RNase T family. In terms of assembly, homodimer. Requires Mg(2+) as cofactor.

In terms of biological role, trims short 3' overhangs of a variety of RNA species, leaving a one or two nucleotide 3' overhang. Responsible for the end-turnover of tRNA: specifically removes the terminal AMP residue from uncharged tRNA (tRNA-C-C-A). Also appears to be involved in tRNA biosynthesis. The polypeptide is Ribonuclease T (Shewanella denitrificans (strain OS217 / ATCC BAA-1090 / DSM 15013)).